The sequence spans 152 residues: Phosphopantetheine adenylyltransferase (152 aa).

S9 contacts substrate. Residues 9-10 and H17 each bind ATP; that span reads SF. 3 residues coordinate substrate: K41, T73, and R87. Residues 88–90, E98, and 122–128 each bind ATP; these read GLR and TSFISSS.

Belongs to the bacterial CoaD family. In terms of assembly, homohexamer. Mg(2+) serves as cofactor.

Its subcellular location is the cytoplasm. The catalysed reaction is (R)-4'-phosphopantetheine + ATP + H(+) = 3'-dephospho-CoA + diphosphate. It functions in the pathway cofactor biosynthesis; coenzyme A biosynthesis; CoA from (R)-pantothenate: step 4/5. In terms of biological role, reversibly transfers an adenylyl group from ATP to 4'-phosphopantetheine, yielding dephospho-CoA (dPCoA) and pyrophosphate. This Flavobacterium johnsoniae (strain ATCC 17061 / DSM 2064 / JCM 8514 / BCRC 14874 / CCUG 350202 / NBRC 14942 / NCIMB 11054 / UW101) (Cytophaga johnsonae) protein is Phosphopantetheine adenylyltransferase.